Here is a 352-residue protein sequence, read N- to C-terminus: Hematopoietic SH2 domain-containing protein (352 aa).

The region spanning 34-125 (WFHGAISRED…PRRELLTQPC (92 aa)) is the SH2 domain. Disordered stretches follow at residues 157–199 (EEAS…LGET) and 241–352 (VISG…PGYC). The segment covering 180–191 (RITTKEATSSCP) has biased composition (polar residues). Residues 283–295 (PKDRKVPTRKAER) show a composition bias toward basic and acidic residues. Pro residues predominate over residues 343-352 (QPPPFAPGYC).

As to quaternary structure, interacts with FES and TNK2. May be phosphorylated by FES and ACK1. As to expression, predominantly expressed in spleen and hematopoietic cells such as peripheral blood leukocytes and weakly expressed in prostate, thymus, heart, small intestine and placenta.

The protein localises to the cytoplasm. It is found in the nucleus. May be a modulator of the apoptotic response through its ability to affect mitochondrial stability. Adapter protein involved in tyrosine kinase and CD28 signaling. Seems to affect CD28-mediated activation of the RE/AP element of the interleukin-2 promoter. In Homo sapiens (Human), this protein is Hematopoietic SH2 domain-containing protein (HSH2D).